A 63-amino-acid polypeptide reads, in one-letter code: Overexpressed in colon carcinoma 1 protein homolog (63 aa).

Residues Met-1 to Ser-10 are compositionally biased toward polar residues. The tract at residues Met-1 to Asn-37 is disordered.

It belongs to the OCC1 family.

The protein is Overexpressed in colon carcinoma 1 protein homolog of Rattus norvegicus (Rat).